The following is a 374-amino-acid chain: Putative C-&gt;U-editing enzyme APOBEC-4 (374 aa).

The CMP/dCMP-type deaminase domain maps to 60–176 (PQTKHLTFYE…AWNRKALQSL (117 aa)). Residue His92 participates in Zn(2+) binding. Residue Glu94 is the Proton donor of the active site. Zn(2+) contacts are provided by Cys126 and Cys133. A disordered region spans residues 259-280 (EKHPLGSAAPAQRQPTRGQDPR).

It belongs to the cytidine and deoxycytidylate deaminase family. It depends on Zn(2+) as a cofactor. Predominantly expressed in testis.

Its function is as follows. Putative C to U editing enzyme whose physiological substrate is not yet known. The protein is Putative C-&gt;U-editing enzyme APOBEC-4 (Apobec4) of Mus musculus (Mouse).